Reading from the N-terminus, the 245-residue chain is Ureidoacrylate amidohydrolase RutB (245 aa).

The active-site Proton acceptor is the Asp-41. Lys-150 is an active-site residue. Cys-183 (nucleophile) is an active-site residue.

This sequence belongs to the isochorismatase family. RutB subfamily.

It carries out the reaction (Z)-3-ureidoacrylate + H2O + H(+) = (Z)-3-aminoacrylate + NH4(+) + CO2. It catalyses the reaction (Z)-3-ureidoacrylate + H2O = (Z)-3-aminoacrylate + carbamate + H(+). The catalysed reaction is (Z)-2-methylureidoacrylate + H2O + H(+) = (Z)-2-methylaminoacrylate + NH4(+) + CO2. In terms of biological role, hydrolyzes ureidoacrylate to form aminoacrylate and carbamate. The carbamate hydrolyzes spontaneously, thereby releasing one of the nitrogen atoms of the pyrimidine ring as ammonia and one of its carbon atoms as CO2. The polypeptide is Ureidoacrylate amidohydrolase RutB (Pseudomonas syringae pv. syringae (strain B728a)).